A 588-amino-acid chain; its full sequence is MASLSLSSAHFSSTSSSSRSSISTSSLSPSSTSLPLLQSPIRRRYRSLRRRLSFSVIPRRTSRSFSTSNSQIRCSINEPLKVMISGAPASGKGTQCELIVHKFGLVHISTGDLLRAEVSSGTDIGKRAKEFMNSGSLVPDEIVIAMVAGRLSREDAKEHGWLLDGFPRSFAQAQSLDKLNVKPDIFILLDVPDEILIDRCVGRRLDPVTGKIYHIKNYPPESDEIKARLVTRPDDTEEKVKARLQIYKQNSEAIISAYSDVMVKIDANRPKEVVFEETQTLLSQIQLKRMIKTDKASPVQDKWRGIPTRLNNIPHSRDIRAYFYEDVLQATIRSIKDGNTRLRVDINIPELNPEMDVYRIGTLMELVQALALSFADDGKRVKVCVQGSMGEGALAGMPLQLAGTRKILEYMDWGDDETLGTFVKLGAIGGKEVDEEDDMFILVAPQNAVGNCIIDDLQAMTTAAGKRPVVLINPRLKDLPASSGIMQTMGREQRLEYALTFDNCYVFRLLYYLGTQYPIMGALRMSYPYRYELYKRVNEENGKEKYVLLATYAERPTPEQIDDAFSGKSRDQSKKASGIWGFLSSVFS.

Residues 1 to 34 (MASLSLSSAHFSSTSSSSRSSISTSSLSPSSTSL) are disordered. A chloroplast-targeting transit peptide spans 1–73 (MASLSLSSAH…SFSTSNSQIR (73 aa)). 89 to 94 (ASGKGT) is a binding site for ATP. The interval 109 to 138 (STGDLLRAEVSSGTDIGKRAKEFMNSGSLV) is NMP. AMP is bound by residues Arg-115, 136 to 138 (SLV), 165 to 168 (GFPR), and Gln-172. The tract at residues 202–235 (GRRLDPVTGKIYHIKNYPPESDEIKARLVTRPDD) is LID. Arg-203 contributes to the ATP binding site. AMP-binding residues include Arg-232 and Arg-243.

It belongs to the adenylate kinase family. Monomer.

The protein resides in the plastid. The protein localises to the chloroplast. It catalyses the reaction AMP + ATP = 2 ADP. Functionally, catalyzes the reversible transfer of the terminal phosphate group between ATP and AMP. This chain is Adenylate kinase 5, chloroplastic, found in Arabidopsis thaliana (Mouse-ear cress).